A 1016-amino-acid polypeptide reads, in one-letter code: Probable outer membrane protein PmpH (1016 aa).

An N-terminal signal peptide occupies residues 1–24 (MPFSLRSTSFCFLACLCSYSYGFA). Positions 697-1016 (GELVPNSLWV…FVSMGLNRIF (320 aa)) constitute an Autotransporter domain.

It belongs to the PMP outer membrane protein family.

Its subcellular location is the secreted. The protein localises to the cell wall. It is found in the cell outer membrane. This Chlamydia trachomatis serovar D (strain ATCC VR-885 / DSM 19411 / UW-3/Cx) protein is Probable outer membrane protein PmpH (pmpH).